The chain runs to 142 residues: 3-hydroxyacyl-[acyl-carrier-protein] dehydratase FabZ (142 aa).

His-46 is a catalytic residue.

It belongs to the thioester dehydratase family. FabZ subfamily.

Its subcellular location is the cytoplasm. It carries out the reaction a (3R)-hydroxyacyl-[ACP] = a (2E)-enoyl-[ACP] + H2O. In terms of biological role, involved in unsaturated fatty acids biosynthesis. Catalyzes the dehydration of short chain beta-hydroxyacyl-ACPs and long chain saturated and unsaturated beta-hydroxyacyl-ACPs. The polypeptide is 3-hydroxyacyl-[acyl-carrier-protein] dehydratase FabZ (Thermus thermophilus (strain ATCC BAA-163 / DSM 7039 / HB27)).